The primary structure comprises 229 residues: Triosephosphate isomerase (229 aa).

Position 16–18 (16–18) interacts with substrate; the sequence is NFK. Catalysis depends on histidine 100, which acts as the Electrophile. Residue glutamate 148 is the Proton acceptor of the active site. Residues isoleucine 153, glycine 188, and 209-210 each bind substrate; that span reads AS.

The protein belongs to the triosephosphate isomerase family. Homotetramer; dimer of dimers.

The protein resides in the cytoplasm. The catalysed reaction is D-glyceraldehyde 3-phosphate = dihydroxyacetone phosphate. The protein operates within carbohydrate biosynthesis; gluconeogenesis. It participates in carbohydrate degradation; glycolysis; D-glyceraldehyde 3-phosphate from glycerone phosphate: step 1/1. In terms of biological role, involved in the gluconeogenesis. Catalyzes stereospecifically the conversion of dihydroxyacetone phosphate (DHAP) to D-glyceraldehyde-3-phosphate (G3P). This chain is Triosephosphate isomerase, found in Methanothermobacter thermautotrophicus (strain ATCC 29096 / DSM 1053 / JCM 10044 / NBRC 100330 / Delta H) (Methanobacterium thermoautotrophicum).